The primary structure comprises 221 residues: GTP cyclohydrolase 1 (221 aa).

Residues C111, H114, and C182 each coordinate Zn(2+).

Belongs to the GTP cyclohydrolase I family. As to quaternary structure, homomer.

It catalyses the reaction GTP + H2O = 7,8-dihydroneopterin 3'-triphosphate + formate + H(+). It functions in the pathway cofactor biosynthesis; 7,8-dihydroneopterin triphosphate biosynthesis; 7,8-dihydroneopterin triphosphate from GTP: step 1/1. In Erwinia tasmaniensis (strain DSM 17950 / CFBP 7177 / CIP 109463 / NCPPB 4357 / Et1/99), this protein is GTP cyclohydrolase 1.